We begin with the raw amino-acid sequence, 563 residues long: Ras and Rab interactor-like protein (563 aa).

The disordered stretch occupies residues glycine 181 to histidine 208. Positions threonine 184–glutamine 196 are enriched in low complexity. One can recognise a VPS9 domain in the interval alanine 381 to arginine 518. A disordered region spans residues threonine 539–proline 563. Over residues glutamine 542 to proline 553 the composition is skewed to low complexity.

In terms of assembly, interacts with RAB5A, RAB22A and MUSK. As to expression, detected in thymus and spleen (at protein level). Detected in lung, liver, kidney, spleen, thymus and skeletal muscle.

It is found in the cell projection. The protein resides in the ruffle. The protein localises to the cytoplasmic vesicle. Its function is as follows. Guanine nucleotide exchange factor (GEF) for RAB5A and RAB22A that activates RAB5A and RAB22A by exchanging bound GDP for free GTP. Plays a role in endocytosis via its role in activating Rab family members. The chain is Ras and Rab interactor-like protein (Rinl) from Mus musculus (Mouse).